Consider the following 463-residue polypeptide: MYTYMEYLQKCFYKSTNWNEDNIYSNITATSQALLDFPIPNGFKIDSSSKTTDYSASSFTLSNHHQINGSLAYLYSSIPLTNTMGTKDVSLQDAIAGFRIIEPSVGLSSKLTNNIIQNRSSLLYGRMYFPGSALEAMIIKRITKNSQLLIKCVNNPHLEKNGTMIVYLQNNTAKYSRELIYSTNEALIGLRCLYNLGNDATSHNFPHVNPAVIPKFDNSVISIGTELWYAARTMSPGLSAALRYSTRSTSTGKPLTMTLAINPIVGHISSTYTVKTSVASTFCSKYDFNVFSYASNLSLGFELYSYANKKKNTFPSFEHHEIYSSSEENKYLKKHPELQRHHRVPIKSHKYQGNRTIINPIQNLDNVYHINPTLLSSTTNSPTNNDNSNTSETVTAAFQNLVNESDFSSVFKFSTSLNDKVVKILWEGRLKDFLVSTGVKLSLNPITNTPEFNKLGISFSYAL.

The protein belongs to the MDM10 family. In terms of assembly, component of the ER-mitochondria encounter structure (ERMES) or MDM complex, composed of MMM1, MDM10, MDM12 and MDM34. Associates with the mitochondrial outer membrane sorting assembly machinery SAM(core) complex.

It localises to the mitochondrion outer membrane. Its function is as follows. Component of the ERMES/MDM complex, which serves as a molecular tether to connect the endoplasmic reticulum and mitochondria. Components of this complex are involved in the control of mitochondrial shape and protein biogenesis and may function in phospholipid exchange. MDM10 is involved in the late assembly steps of the general translocase of the mitochondrial outer membrane (TOM complex). Functions in the TOM40-specific route of the assembly of outer membrane beta-barrel proteins, including the association of TOM40 with the receptor TOM22 and small TOM proteins. Can associate with the SAM(core) complex as well as the MDM12-MMM1 complex, both involved in late steps of the major beta-barrel assembly pathway, that is responsible for biogenesis of all outer membrane beta-barrel proteins. May act as a switch that shuttles between both complexes and channels precursor proteins into the TOM40-specific pathway. Plays a role in mitochondrial morphology and in the inheritance of mitochondria. In Candida dubliniensis (strain CD36 / ATCC MYA-646 / CBS 7987 / NCPF 3949 / NRRL Y-17841) (Yeast), this protein is Mitochondrial distribution and morphology protein 10.